The sequence spans 505 residues: MARAERSVLLRLENISKEFPGVKALSNVHFDLRSGEVHAVCGENGAGKSTLMKIISGVYQPSEGTILHKGEKVQYASPLQSEAAGIAIIHQELNLVPHLSVAENIYLAREPRRGFLVDRKKLRLDAKRCLDRLGVDINPDQLVRSLSVAQCQMVEIAKALSLDAEVLIMDEPTSSLTEQETRLLFKVIRDLKASGVGIVYISHRLDEMAEIVDRVTILRDGRYISTDDFASITVDDIVTRMVGRSLEDKFPERTSRPTDDILFSVEGLTRNGVFSDVSFSLRRGEILGFAGLMGAGRTEVARAIFGADPLDAGKIVFNGRELSIGSPQDAIEEGIAYLSEDRKSDGLAIKMSVAANTTLANLGEVSNRFGLIDFKKHDDVAKRYVDLLNIRTPSIDQTVRLLSGGNQQKIIIGKWLFRQSRVLFFDEPTRGIDVGAKFAIYKIMDELAAQGIGVILISSELPEILGLTDRIAVFHQGRITGVLETAKTNQEEIMRYASGYGRAAQ.

ABC transporter domains lie at 10-245 (LRLE…VGRS) and 256-501 (RPTD…SGYG). 42-49 (GENGAGKS) is a binding site for ATP.

It belongs to the ABC transporter superfamily. Carbohydrate importer 2 (CUT2) (TC 3.A.1.2) family.

The protein resides in the cell inner membrane. It carries out the reaction D-ribose(out) + ATP + H2O = D-ribose(in) + ADP + phosphate + H(+). The enzyme catalyses D-galactose(out) + ATP + H2O = D-galactose(in) + ADP + phosphate + H(+). Functionally, part of an ABC transporter complex involved in carbohydrate import. Could be involved in ribose, galactose and/or methyl galactoside import. Responsible for energy coupling to the transport system. The sequence is that of Putative ribose/galactose/methyl galactoside import ATP-binding protein 1 from Agrobacterium fabrum (strain C58 / ATCC 33970) (Agrobacterium tumefaciens (strain C58)).